A 475-amino-acid polypeptide reads, in one-letter code: UDP-N-acetylmuramate--L-alanine ligase (475 aa).

121 to 127 (GTHGKTT) contributes to the ATP binding site.

The protein belongs to the MurCDEF family.

The protein resides in the cytoplasm. It catalyses the reaction UDP-N-acetyl-alpha-D-muramate + L-alanine + ATP = UDP-N-acetyl-alpha-D-muramoyl-L-alanine + ADP + phosphate + H(+). The protein operates within cell wall biogenesis; peptidoglycan biosynthesis. Functionally, cell wall formation. This Salinibacter ruber (strain DSM 13855 / M31) protein is UDP-N-acetylmuramate--L-alanine ligase.